The following is an 872-amino-acid chain: Probable cation-transporting P-type ATPase (872 aa).

Topologically, residues 1-41 (MNKWTGLSAAAVLESRAQHGANLIPTKKLTPFWLLFLEQFK) are cytoplasmic. The chain crosses the membrane as a helical span at residues 42 to 62 (SLVVILLLVATILSLVVAIIS). Over 63-79 (GVNANWLFDHNLVIEWT) the chain is Extracellular. Residues 80 to 100 (QPFVILITVLANSLIGSIQEF) form a helical membrane-spanning segment. Topologically, residues 101–237 (KAQKSAHTLK…TKLSPLQQKL (137 aa)) are cytoplasmic. Residues 238–257 (EKVGKWFSWFGLGLFVVVFL) form a helical membrane-spanning segment. Residues 258–275 (VQLGLLGFHNFSANWSIA) lie on the Extracellular side of the membrane. The helical transmembrane segment at 276–293 (LIGAIALVVAIIPEGLVT) threads the bilayer. The Cytoplasmic segment spans residues 294–642 (FINVIFALSV…EQGRKTFLTC (349 aa)). Asp-331 acts as the 4-aspartylphosphate intermediate in catalysis. Mg(2+) is bound by residues Asp-587 and Asp-591. The chain crosses the membrane as a helical span at residues 643–662 (KRVLFNLFLTSIAGTIVVLL). Topologically, residues 663 to 685 (GLFVLGEVFREQLSKANHNFQVF) are extracellular. A helical membrane pass occupies residues 686-706 (TPTQLLIINLFVHGFPAVALA). The Cytoplasmic portion of the chain corresponds to 707-724 (IQPVQEKLMLKPFSTKNL). Residues 725–747 (FYNRGGFDLIWQSLLLSFLTLLF) traverse the membrane as a helical segment. The Extracellular portion of the chain corresponds to 748 to 768 (YSLGMVYAINDPELGKSGDLI). The helical transmembrane segment at 769 to 788 (NRAGATCGFMVLGGSAALNS) threads the bilayer. The Cytoplasmic portion of the chain corresponds to 789–801 (LNLMVDRPLVATN). The helical transmembrane segment at 802-824 (PKHYGIVWLGALSSIFVFLLIIF) threads the bilayer. Residues 825–842 (INPLGLVFSTLKDLTAHP) lie on the Extracellular side of the membrane. A helical membrane pass occupies residues 843–863 (VLIGYSFGGVLLYMTINEVVK). The Cytoplasmic portion of the chain corresponds to 864–872 (LIRLSYGSV).

Belongs to the cation transport ATPase (P-type) (TC 3.A.3) family. Type II subfamily.

It localises to the cell membrane. It catalyses the reaction ATP + H2O = ADP + phosphate + H(+). In terms of biological role, could mediate calcium influx. The chain is Probable cation-transporting P-type ATPase (pacL) from Mycoplasma pneumoniae (strain ATCC 29342 / M129 / Subtype 1) (Mycoplasmoides pneumoniae).